Reading from the N-terminus, the 329-residue chain is Tryptophan--tRNA ligase (329 aa).

ATP is bound by residues 9–11 (QPS) and 17–18 (GN). The short motif at 10 to 18 (PSGTITLGN) is the 'HIGH' region element. L-tryptophan is bound at residue D132. Residues 144 to 146 (GDD), V183, and 192 to 196 (KMSKS) each bind ATP. The 'KMSKS' region motif lies at 192–196 (KMSKS).

It belongs to the class-I aminoacyl-tRNA synthetase family. Homodimer.

Its subcellular location is the cytoplasm. It catalyses the reaction tRNA(Trp) + L-tryptophan + ATP = L-tryptophyl-tRNA(Trp) + AMP + diphosphate + H(+). Functionally, catalyzes the attachment of tryptophan to tRNA(Trp). The sequence is that of Tryptophan--tRNA ligase from Bacillus anthracis.